We begin with the raw amino-acid sequence, 368 residues long: Leu/Ile/Val-binding protein homolog 3 (368 aa).

Positions 1–23 (MNLKLLSSVAFAATIGFASAAYA) are cleaved as a signal peptide.

Belongs to the leucine-binding protein family.

In terms of biological role, component of an amino-acid transport system. The protein is Leu/Ile/Val-binding protein homolog 3 of Brucella melitensis biotype 1 (strain ATCC 23456 / CCUG 17765 / NCTC 10094 / 16M).